The sequence spans 446 residues: CBL-interacting protein kinase 8 (446 aa).

Positions 13-266 constitute a Protein kinase domain; the sequence is YEVGRTIGEG…IEEIRNDEWF (254 aa). ATP contacts are provided by residues 19–27 and lysine 42; that span reads IGEGTFAKV. Residue aspartate 136 is the Proton acceptor of the active site. Residues 154-181 are activation loop; sequence DFGLSAWPAQGGALLRTTCGTPNYVAPE. The region spanning 301 to 329 is the NAF domain; that stretch reads LDDEAGPLTLNAFDLIILSQGLNLAALFD. Residues 336–365 form a PPI region; the sequence is KLQNRFLSRKPAKVIMSSMEVVAQSMGYKT.

The protein belongs to the protein kinase superfamily. CAMK Ser/Thr protein kinase family. SNF1 subfamily. Requires Mn(2+) as cofactor.

The catalysed reaction is L-seryl-[protein] + ATP = O-phospho-L-seryl-[protein] + ADP + H(+). It carries out the reaction L-threonyl-[protein] + ATP = O-phospho-L-threonyl-[protein] + ADP + H(+). CIPK serine-threonine protein kinases interact with CBL proteins. Binding of a CBL protein to the regulatory NAF domain of CIPK protein lead to the activation of the kinase in a calcium-dependent manner. This is CBL-interacting protein kinase 8 (CIPK8) from Oryza sativa subsp. japonica (Rice).